The chain runs to 284 residues: Deoxyribonuclease-1 (284 aa).

The N-terminal stretch at 1–22 is a signal peptide; it reads MRAARLMGALLALAGLLQLALS. N-linked (GlcNAc...) asparagine glycosylation occurs at Asn40. Residue Glu100 is part of the active site. Cys123 and Cys126 are oxidised to a cystine. An N-linked (GlcNAc...) asparagine glycan is attached at Asn128. His156 is an active-site residue. An intrachain disulfide couples Cys195 to Cys231.

The protein belongs to the DNase I family. It depends on Ca(2+) as a cofactor. The cofactor is Mg(2+).

The protein resides in the secreted. Its subcellular location is the zymogen granule. The protein localises to the nucleus envelope. It carries out the reaction Endonucleolytic cleavage to 5'-phosphodinucleotide and 5'-phosphooligonucleotide end-products.. Functionally, serum endocuclease secreted into body fluids by a wide variety of exocrine and endocrine organs. Expressed by non-hematopoietic tissues and preferentially cleaves protein-free DNA. Among other functions, seems to be involved in cell death by apoptosis. Binds specifically to G-actin and blocks actin polymerization. Together with DNASE1L3, plays a key role in degrading neutrophil extracellular traps (NETs). NETs are mainly composed of DNA fibers and are released by neutrophils to bind pathogens during inflammation. Degradation of intravascular NETs by DNASE1 and DNASE1L3 is required to prevent formation of clots that obstruct blood vessels and cause organ damage following inflammation. The chain is Deoxyribonuclease-1 (DNASE1) from Sus scrofa (Pig).